The primary structure comprises 393 residues: Protein TsgA homolog (393 aa).

12 helical membrane passes run 11–31 (WISFLSYALTGALVIVTGMVM), 51–71 (FLNAGILISIFLNAWLMEIIP), 78–98 (FGFVLMVLAVAGLMLSHSLAL), 101–121 (AAMFVLGLVSGITMSIGTFLI), 134–154 (LLFTDSFFSMAGMIFPMVAAY), 162–182 (WYWVYACIGLVYVAIFILTFG), 206–226 (IGVLFLSIAALCYILGQLGFI), 245–265 (TLVSDFWMSYMFGMWAFSFIL), 273–293 (ILTVLAGLAAVLMYLFIKAQP), 297–317 (AWFILTLGFFSSAIYTSIITL), 332–352 (FVLTCGTIGTMLTFVVTGPIV), and 361–381 (LLTANGLYAVVFVMCFILGFV).

This sequence belongs to the major facilitator superfamily. TsgA family.

The protein localises to the cell inner membrane. The chain is Protein TsgA homolog from Citrobacter koseri (strain ATCC BAA-895 / CDC 4225-83 / SGSC4696).